The sequence spans 444 residues: Xaa-Pro dipeptidase (444 aa).

5 residues coordinate Mn(2+): aspartate 247, aspartate 258, histidine 340, glutamate 385, and glutamate 424.

This sequence belongs to the peptidase M24B family. Bacterial-type prolidase subfamily. Mn(2+) serves as cofactor.

It catalyses the reaction Xaa-L-Pro dipeptide + H2O = an L-alpha-amino acid + L-proline. In terms of biological role, splits dipeptides with a prolyl residue in the C-terminal position. The protein is Xaa-Pro dipeptidase of Proteus mirabilis (strain HI4320).